The sequence spans 243 residues: Ribosomal RNA small subunit methyltransferase J (243 aa).

S-adenosyl-L-methionine is bound by residues 112–113 and D164; that span reads ER.

Belongs to the methyltransferase superfamily. RsmJ family.

It localises to the cytoplasm. It catalyses the reaction guanosine(1516) in 16S rRNA + S-adenosyl-L-methionine = N(2)-methylguanosine(1516) in 16S rRNA + S-adenosyl-L-homocysteine + H(+). Functionally, specifically methylates the guanosine in position 1516 of 16S rRNA. In Legionella pneumophila (strain Paris), this protein is Ribosomal RNA small subunit methyltransferase J.